A 62-amino-acid chain; its full sequence is MKVNDRVTVKTDGGPRRPGVVLAVEEFSEGTMYLVSLEDYPLGIWFFNESGHQDGIFVEKTE.

Belongs to the DsrB family.

In Citrobacter koseri (strain ATCC BAA-895 / CDC 4225-83 / SGSC4696), this protein is Protein DsrB.